The chain runs to 580 residues: Type 3 secretion system translocon protein SctE (580 aa).

IpgC chaperone binding domain regions lie at residues 15–45 (KILT…IADL) and 51–72 (INTT…APKS). The interval 61–70 (NILIPELKAP) is mediates interaction with human MAD2L2. Positions 104-224 (AWKSQQQARQ…MQLEKEIDSF (121 aa)) form a coiled coil. The next 2 membrane-spanning stretches (helical) occupy residues 313 to 333 (ILGA…GGAS) and 399 to 419 (IGSI…VVLV).

Belongs to the SctE/SipB/YopB family. The core secretion machinery of the T3SS is composed of approximately 20 different proteins, including cytoplasmic components, a base, an export apparatus and a needle. This subunit is involved in the formation of a pore, called the translocon, in host membrane. Interacts with IpaC/SctB. Interacts with the needle tip protein IpaD/SctA. Interacts with the molecular chaperone IpgC, which prevents premature association with IpaC/SctB within the cytoplasm of Shigella cells and protects IpaB/SctE from proteolysis. Interacts with the host protein ICE in the cytoplasm of infected macrophages. Interacts with human MAD2L2 in the G2/M phase of the cell cycle.

Its subcellular location is the secreted. It localises to the host membrane. The protein resides in the host cell. It is found in the host nucleus. Its activity is regulated as follows. Interaction with the membrane is affected by the pH. IpaB/SctE is more efficient in destabilizing the membrane at pH 5.0 than at neutral pH. In terms of biological role, component of the type III secretion system (T3SS), also called injectisome, which is used to inject bacterial effector proteins into eukaryotic host cells. IpaB/SctE and IpaC/SctB are inserted into the host membrane where they form a pore and allow the translocation of effector proteins into the cytosol of target cells. Interaction with IpaD/SctA at needle tips leads to the formation of the MxiH/SctF-IpaD/SctA-IpaB/SctE ternary complex, which is essential for host cell sensing. Interaction of IpaB/SctE with host membrane lipids promotes recruitment of IpaC/SctB at the needle tip concomitant with translocon insertion into the host membrane and type III secretion induction. Required for efficient dissemination. Necessary for lysis of the two cellular membranes that surround bacteria in protrusions during cell-to-cell spread. Is sufficient to induce macrophage apoptosis through activation of the interleukin-1 beta converting enzyme (ICE) in infected macrophages. In epithelial cells, causes cell-cycle arrest by targeting host MAD2L2, an anaphase-promoting complex/cyclosome (APC) inhibitor. This Shigella flexneri protein is Type 3 secretion system translocon protein SctE.